The sequence spans 435 residues: 3-phosphoshikimate 1-carboxyvinyltransferase (435 aa).

Positions 25, 26, and 30 each coordinate 3-phosphoshikimate. Lysine 25 is a binding site for phosphoenolpyruvate. Residues glycine 99 and arginine 130 each contribute to the phosphoenolpyruvate site. Serine 176, serine 177, glutamine 178, serine 204, aspartate 319, asparagine 342, and lysine 346 together coordinate 3-phosphoshikimate. A phosphoenolpyruvate-binding site is contributed by glutamine 178. The Proton acceptor role is filled by aspartate 319. 3 residues coordinate phosphoenolpyruvate: arginine 350, arginine 394, and lysine 419.

This sequence belongs to the EPSP synthase family. Monomer.

The protein resides in the cytoplasm. It catalyses the reaction 3-phosphoshikimate + phosphoenolpyruvate = 5-O-(1-carboxyvinyl)-3-phosphoshikimate + phosphate. Its pathway is metabolic intermediate biosynthesis; chorismate biosynthesis; chorismate from D-erythrose 4-phosphate and phosphoenolpyruvate: step 6/7. Its function is as follows. Catalyzes the transfer of the enolpyruvyl moiety of phosphoenolpyruvate (PEP) to the 5-hydroxyl of shikimate-3-phosphate (S3P) to produce enolpyruvyl shikimate-3-phosphate and inorganic phosphate. This chain is 3-phosphoshikimate 1-carboxyvinyltransferase, found in Haemophilus ducreyi (strain 35000HP / ATCC 700724).